A 116-amino-acid chain; its full sequence is Large ribosomal subunit protein uL23 (116 aa).

This sequence belongs to the universal ribosomal protein uL23 family. In terms of assembly, part of the 50S ribosomal subunit. Contacts protein L29, and trigger factor when it is bound to the ribosome.

In terms of biological role, one of the early assembly proteins it binds 23S rRNA. One of the proteins that surrounds the polypeptide exit tunnel on the outside of the ribosome. Forms the main docking site for trigger factor binding to the ribosome. In Psychrobacter arcticus (strain DSM 17307 / VKM B-2377 / 273-4), this protein is Large ribosomal subunit protein uL23.